The following is a 264-amino-acid chain: Thymidylate synthase (264 aa).

R21 provides a ligand contact to dUMP. H51 lines the (6R)-5,10-methylene-5,6,7,8-tetrahydrofolate pocket. Residue 126–127 (RR) coordinates dUMP. C146 functions as the Nucleophile in the catalytic mechanism. DUMP is bound by residues 166 to 169 (RSAD), N177, and 207 to 209 (HLY). Residue D169 participates in (6R)-5,10-methylene-5,6,7,8-tetrahydrofolate binding. A263 provides a ligand contact to (6R)-5,10-methylene-5,6,7,8-tetrahydrofolate.

It belongs to the thymidylate synthase family. Bacterial-type ThyA subfamily. As to quaternary structure, homodimer.

The protein resides in the cytoplasm. The catalysed reaction is dUMP + (6R)-5,10-methylene-5,6,7,8-tetrahydrofolate = 7,8-dihydrofolate + dTMP. It participates in pyrimidine metabolism; dTTP biosynthesis. In terms of biological role, catalyzes the reductive methylation of 2'-deoxyuridine-5'-monophosphate (dUMP) to 2'-deoxythymidine-5'-monophosphate (dTMP) while utilizing 5,10-methylenetetrahydrofolate (mTHF) as the methyl donor and reductant in the reaction, yielding dihydrofolate (DHF) as a by-product. This enzymatic reaction provides an intracellular de novo source of dTMP, an essential precursor for DNA biosynthesis. This Ralstonia nicotianae (strain ATCC BAA-1114 / GMI1000) (Ralstonia solanacearum) protein is Thymidylate synthase.